The primary structure comprises 463 residues: Bifunctional protein HldE (463 aa).

Residues M1 to I315 form a ribokinase region. N191–E194 is an ATP binding site. D260 is an active-site residue. The cytidylyltransferase stretch occupies residues F334 to D463.

The protein in the N-terminal section; belongs to the carbohydrate kinase PfkB family. It in the C-terminal section; belongs to the cytidylyltransferase family. Homodimer.

The enzyme catalyses D-glycero-beta-D-manno-heptose 7-phosphate + ATP = D-glycero-beta-D-manno-heptose 1,7-bisphosphate + ADP + H(+). It catalyses the reaction D-glycero-beta-D-manno-heptose 1-phosphate + ATP + H(+) = ADP-D-glycero-beta-D-manno-heptose + diphosphate. It functions in the pathway nucleotide-sugar biosynthesis; ADP-L-glycero-beta-D-manno-heptose biosynthesis; ADP-L-glycero-beta-D-manno-heptose from D-glycero-beta-D-manno-heptose 7-phosphate: step 1/4. Its pathway is nucleotide-sugar biosynthesis; ADP-L-glycero-beta-D-manno-heptose biosynthesis; ADP-L-glycero-beta-D-manno-heptose from D-glycero-beta-D-manno-heptose 7-phosphate: step 3/4. Its function is as follows. Catalyzes the phosphorylation of D-glycero-D-manno-heptose 7-phosphate at the C-1 position to selectively form D-glycero-beta-D-manno-heptose-1,7-bisphosphate. Functionally, catalyzes the ADP transfer from ATP to D-glycero-beta-D-manno-heptose 1-phosphate, yielding ADP-D-glycero-beta-D-manno-heptose. The sequence is that of Bifunctional protein HldE from Helicobacter pylori (strain HPAG1).